Here is a 99-residue protein sequence, read N- to C-terminus: Large ribosomal subunit protein eL30 (99 aa).

The protein belongs to the eukaryotic ribosomal protein eL30 family.

The polypeptide is Large ribosomal subunit protein eL30 (rpl30e) (Pyrococcus horikoshii (strain ATCC 700860 / DSM 12428 / JCM 9974 / NBRC 100139 / OT-3)).